The following is a 1713-amino-acid chain: Serine/threonine-protein kinase MRCK beta (1713 aa).

In terms of domain architecture, Protein kinase spans 76–342; that stretch reads FEIIKVIGRG…IEDFKKHAFF (267 aa). ATP contacts are provided by residues 82-90 and K105; that span reads IGRGAFGEV. D200 serves as the catalytic Proton acceptor. Residues S221 and S233 each carry the phosphoserine; by autocatalysis modification. A Phosphothreonine; by autocatalysis modification is found at T239. The 71-residue stretch at 343-413 folds into the AGC-kinase C-terminal domain; sequence EGLNWENIRN…TTESCFSDRG (71 aa). T423 carries the phosphothreonine modification. Positions 434 to 649 form a coiled coil; the sequence is LENSLQIEAY…ASKERKLREH (216 aa). The disordered stretch occupies residues 461 to 485; sequence LQESTQTVQSLHGSTRALGNSNRDK. The segment covering 463 to 481 has biased composition (polar residues); that stretch reads ESTQTVQSLHGSTRALGNS. Position 671 is an omega-N-methylarginine (R671). Coiled-coil stretches lie at residues 681–815 and 882–939; these read QEIS…AHWE and ALEA…FRAD. Residue S927 is modified to Phosphoserine. A Phosphotyrosine modification is found at Y954. Composition is skewed to polar residues over residues 971-994 and 1001-1014; these read ASDQ…TSTE and RSQQ…LPNT. The disordered stretch occupies residues 971–1014; it reads ASDQETQASKLDLSPSVSVATSTEQQEDAARSQQRPSTVPLPNT. The Phorbol-ester/DAG-type zinc finger occupies 1026–1076; sequence AHQFSIKSFPSPTQCSHCTSLMVGLIRQGYACEVCAFSCHVSCKDSAPQVC. Residues 1096–1215 form the PH domain; it reads GTAYKGYVKV…WVGILEGLQA (120 aa). One can recognise a CNH domain in the interval 1241–1515; it reads IKTVLAAAIV…RPLNSDGSLN (275 aa). A CRIB domain is found at 1585–1598; the sequence is ISNPTNFNHVAHMG. The disordered stretch occupies residues 1615-1713; that stretch reads PTAQEEKQGP…EGLDQPACDA (99 aa). Residues 1666–1677 show a composition bias toward basic and acidic residues; it reads DFDKEPDSDSTK. Residues S1682, S1684, S1688, S1692, and S1695 each carry the phosphoserine modification.

This sequence belongs to the protein kinase superfamily. AGC Ser/Thr protein kinase family. DMPK subfamily. As to quaternary structure, homodimer and homotetramer via the coiled coil regions. Interacts tightly with GTP-bound but not GDP-bound CDC42. Interacts with TJP1; this interaction requires the presence of catalytically active CDC42. Forms a tripartite complex with MYO18A and LURAP1 with the latter acting as an adapter connecting CDC42BPB and MYO18A. LURAP1 binding results in activation of CDC42BPB by abolition of its negative autoregulation. Interacts with STRIP1, STRN3 and SIKE1. Interacts with CPNE4 (via VWFA domain). Interacts with LURAP1. Interacts (via AGC-kinase C-terminal domain) with FAM89B/LRAP25 (via LRR repeat). Forms a tripartite complex with FAM89B/LRAP25 and LIMK1. Mg(2+) is required as a cofactor. Post-translationally, proteolytically cleaved by caspases upon apoptosis induction. In terms of tissue distribution, expressed in all tissues examined with highest levels in lung and kidney.

The protein localises to the cytoplasm. It is found in the cell membrane. Its subcellular location is the cell junction. It localises to the cell projection. The protein resides in the lamellipodium. It catalyses the reaction L-seryl-[protein] + ATP = O-phospho-L-seryl-[protein] + ADP + H(+). It carries out the reaction L-threonyl-[protein] + ATP = O-phospho-L-threonyl-[protein] + ADP + H(+). Its activity is regulated as follows. Maintained in an inactive, closed conformation by an interaction between the kinase domain and the negative autoregulatory C-terminal coiled-coil region. Agonist binding to the phorbol ester binding site disrupts this, releasing the kinase domain to allow N-terminus-mediated dimerization and kinase activation by transautophosphorylation. Inhibited by chelerythrine chloride. Functionally, serine/threonine-protein kinase which is an important downstream effector of CDC42 and plays a role in the regulation of cytoskeleton reorganization and cell migration. Regulates actin cytoskeletal reorganization via phosphorylation of PPP1R12C and MYL9/MLC2. In concert with MYO18A and LURAP1, is involved in modulating lamellar actomyosin retrograde flow that is crucial to cell protrusion and migration. Phosphorylates PPP1R12A. In concert with FAM89B/LRAP25 mediates the targeting of LIMK1 to the lamellipodium resulting in its activation and subsequent phosphorylation of CFL1 which is important for lamellipodial F-actin regulation. This chain is Serine/threonine-protein kinase MRCK beta, found in Rattus norvegicus (Rat).